A 1399-amino-acid polypeptide reads, in one-letter code: DNA-directed RNA polymerase subunit beta' (1399 aa).

Residues C71, C73, C86, and C89 each contribute to the Zn(2+) site. Residues D462, D464, and D466 each coordinate Mg(2+). Positions 810, 884, 891, and 894 each coordinate Zn(2+). The tract at residues 1379 to 1399 is disordered; that stretch reads KQAAIVPSQPEPQPLALPPAE. The segment covering 1387–1399 has biased composition (pro residues); sequence QPEPQPLALPPAE.

The protein belongs to the RNA polymerase beta' chain family. In terms of assembly, the RNAP catalytic core consists of 2 alpha, 1 beta, 1 beta' and 1 omega subunit. When a sigma factor is associated with the core the holoenzyme is formed, which can initiate transcription. The cofactor is Mg(2+). Zn(2+) is required as a cofactor.

The catalysed reaction is RNA(n) + a ribonucleoside 5'-triphosphate = RNA(n+1) + diphosphate. Functionally, DNA-dependent RNA polymerase catalyzes the transcription of DNA into RNA using the four ribonucleoside triphosphates as substrates. The polypeptide is DNA-directed RNA polymerase subunit beta' (Bradyrhizobium sp. (strain ORS 278)).